The primary structure comprises 421 residues: tRNA (guanine(37)-N(1))-methyltransferase (421 aa).

S-adenosyl-L-methionine contacts are provided by residues R198, 242 to 243 (DL), 270 to 271 (DA), and N293.

It belongs to the class I-like SAM-binding methyltransferase superfamily. TRM5/TYW2 family. As to quaternary structure, monomer.

The protein resides in the mitochondrion matrix. It localises to the nucleus. It is found in the cytoplasm. It carries out the reaction guanosine(37) in tRNA + S-adenosyl-L-methionine = N(1)-methylguanosine(37) in tRNA + S-adenosyl-L-homocysteine + H(+). Functionally, specifically methylates the N1 position of guanosine-37 in various cytoplasmic and mitochondrial tRNAs. Methylation is not dependent on the nature of the nucleoside 5' of the target nucleoside. This is the first step in the biosynthesis of wybutosine (yW), a modified base adjacent to the anticodon of tRNAs and required for accurate decoding. This chain is tRNA (guanine(37)-N(1))-methyltransferase, found in Paramecium tetraurelia.